The primary structure comprises 89 residues: Small ribosomal subunit protein uS15 (89 aa).

This sequence belongs to the universal ribosomal protein uS15 family. As to quaternary structure, part of the 30S ribosomal subunit. Forms a bridge to the 50S subunit in the 70S ribosome, contacting the 23S rRNA.

In terms of biological role, one of the primary rRNA binding proteins, it binds directly to 16S rRNA where it helps nucleate assembly of the platform of the 30S subunit by binding and bridging several RNA helices of the 16S rRNA. Functionally, forms an intersubunit bridge (bridge B4) with the 23S rRNA of the 50S subunit in the ribosome. This Xanthobacter autotrophicus (strain ATCC BAA-1158 / Py2) protein is Small ribosomal subunit protein uS15.